A 492-amino-acid chain; its full sequence is Catalase isozyme 1 (492 aa).

Residues His65 and Asn138 contribute to the active site. Tyr348 lines the heme pocket.

The protein belongs to the catalase family. As to quaternary structure, homotetramer. The cofactor is heme. Scutella, milky endosperm of immature kernels, leaves and epicotyls.

Its subcellular location is the peroxisome. The enzyme catalyses 2 H2O2 = O2 + 2 H2O. Functionally, occurs in almost all aerobically respiring organisms and serves to protect cells from the toxic effects of hydrogen peroxide. This Zea mays (Maize) protein is Catalase isozyme 1 (CAT1).